A 66-amino-acid polypeptide reads, in one-letter code: MKINKYVEDLKAKSAAELNEELVAAKKELFNLRFQNATNQLDNTSRIKEVRKNIARIQTVIAQKNA.

This sequence belongs to the universal ribosomal protein uL29 family.

The polypeptide is Large ribosomal subunit protein uL29 (Lachnospira eligens (strain ATCC 27750 / DSM 3376 / VPI C15-48 / C15-B4) (Eubacterium eligens)).